The chain runs to 237 residues: Ribosomal RNA small subunit methyltransferase G (237 aa).

S-adenosyl-L-methionine-binding positions include Gly-78, Phe-83, 129–130, and Arg-148; that span reads AE.

It belongs to the methyltransferase superfamily. RNA methyltransferase RsmG family.

The protein localises to the cytoplasm. Specifically methylates the N7 position of a guanine in 16S rRNA. The protein is Ribosomal RNA small subunit methyltransferase G of Streptococcus pyogenes serotype M12 (strain MGAS2096).